The following is a 361-amino-acid chain: 3-dehydroquinate synthase (361 aa).

NAD(+)-binding positions include 60-65 (DAEAAK), 94-98 (GATTD), 118-119 (TT), K131, and K140. Zn(2+) is bound by residues E173, H242, and H258.

Belongs to the sugar phosphate cyclases superfamily. Dehydroquinate synthase family. Co(2+) serves as cofactor. The cofactor is Zn(2+). It depends on NAD(+) as a cofactor.

The protein localises to the cytoplasm. The enzyme catalyses 7-phospho-2-dehydro-3-deoxy-D-arabino-heptonate = 3-dehydroquinate + phosphate. It functions in the pathway metabolic intermediate biosynthesis; chorismate biosynthesis; chorismate from D-erythrose 4-phosphate and phosphoenolpyruvate: step 2/7. Its function is as follows. Catalyzes the conversion of 3-deoxy-D-arabino-heptulosonate 7-phosphate (DAHP) to dehydroquinate (DHQ). The chain is 3-dehydroquinate synthase from Cutibacterium acnes (strain DSM 16379 / KPA171202) (Propionibacterium acnes).